Consider the following 71-residue polypeptide: Cell division protein ZapB (71 aa).

A coiled-coil region spans residues 5-67 (LEVLEQLESK…RALLGKMDQM (63 aa)).

Belongs to the ZapB family. As to quaternary structure, homodimer. The ends of the coiled-coil dimer bind to each other, forming polymers. Interacts with FtsZ.

It is found in the cytoplasm. Its function is as follows. Non-essential, abundant cell division factor that is required for proper Z-ring formation. It is recruited early to the divisome by direct interaction with FtsZ, stimulating Z-ring assembly and thereby promoting cell division earlier in the cell cycle. Its recruitment to the Z-ring requires functional FtsA or ZipA. The sequence is that of Cell division protein ZapB from Aeromonas hydrophila subsp. hydrophila (strain ATCC 7966 / DSM 30187 / BCRC 13018 / CCUG 14551 / JCM 1027 / KCTC 2358 / NCIMB 9240 / NCTC 8049).